A 412-amino-acid polypeptide reads, in one-letter code: Protein translocase subunit SecY (412 aa).

Transmembrane regions (helical) follow at residues 17–37, 58–78, 117–137, 143–163, 170–190, 251–271, 293–313, 350–370, and 372–392; these read IFLT…PVPG, IFSG…VPYI, ALGW…PYVF, FVVQ…WFSE, IGNG…PKLI, VMPI…GQVI, YLIF…SLII, TFLG…IENI, and SIST…GVAI.

The protein belongs to the SecY/SEC61-alpha family. Component of the plastid Sec protein translocase complex, which is composed of at least SecY and SecE.

It is found in the plastid. It localises to the chloroplast thylakoid membrane. The central subunit of the protein translocation channel SecYE. Consists of two halves formed by TMs 1-5 and 6-10. These two domains form a lateral gate at the front which open onto the bilayer between TMs 2 and 7, and are clamped together by SecE at the back. The channel is closed by both a pore ring composed of hydrophobic SecY resides and a short helix (helix 2A) on the extracellular side of the membrane which forms a plug. The chain is Protein translocase subunit SecY from Pyrenomonas salina.